The following is a 437-amino-acid chain: Tryptophan--tRNA ligase (437 aa).

The 'HIGH' region motif lies at 74–82; it reads PSGKVHLGH. A 'KMSKS' region motif is present at residues 321–325; that stretch reads KMSSS.

It belongs to the class-I aminoacyl-tRNA synthetase family.

The protein resides in the cytoplasm. It carries out the reaction tRNA(Trp) + L-tryptophan + ATP = L-tryptophyl-tRNA(Trp) + AMP + diphosphate + H(+). The chain is Tryptophan--tRNA ligase from Methanosarcina acetivorans (strain ATCC 35395 / DSM 2834 / JCM 12185 / C2A).